The sequence spans 317 residues: Sulfate adenylyltransferase subunit 2 (317 aa).

Disordered regions lie at residues Met1–Asp21 and Arg298–Phe317.

It belongs to the PAPS reductase family. CysD subfamily. In terms of assembly, heterodimer composed of CysD, the smaller subunit, and CysN.

It catalyses the reaction sulfate + ATP + H(+) = adenosine 5'-phosphosulfate + diphosphate. The protein operates within sulfur metabolism; hydrogen sulfide biosynthesis; sulfite from sulfate: step 1/3. Functionally, with CysN forms the ATP sulfurylase (ATPS) that catalyzes the adenylation of sulfate producing adenosine 5'-phosphosulfate (APS) and diphosphate, the first enzymatic step in sulfur assimilation pathway. APS synthesis involves the formation of a high-energy phosphoric-sulfuric acid anhydride bond driven by GTP hydrolysis by CysN coupled to ATP hydrolysis by CysD. In Rhizobium etli (strain CIAT 652), this protein is Sulfate adenylyltransferase subunit 2.